The sequence spans 327 residues: Sugar transporter ERD6-like 9 (327 aa).

The next 8 membrane-spanning stretches (helical) occupy residues 26–46 (FLVF…VALG), 68–88 (VFGS…ATIA), 102–122 (VFCI…WLDL), 125–145 (FFVG…IAEI), 152–172 (GTFT…AYYL), 180–200 (IIAL…FFVP), 260–280 (LTIG…GLGY), and 295–315 (IGMT…LILV).

This sequence belongs to the major facilitator superfamily. Sugar transporter (TC 2.A.1.1) family.

The protein localises to the membrane. In terms of biological role, sugar transporter. In Arabidopsis thaliana (Mouse-ear cress), this protein is Sugar transporter ERD6-like 9.